The primary structure comprises 354 residues: Methylthioribose-1-phosphate isomerase (354 aa).

Catalysis depends on aspartate 246, which acts as the Proton donor.

This sequence belongs to the eIF-2B alpha/beta/delta subunits family. MtnA subfamily.

It localises to the cytoplasm. The protein resides in the nucleus. The catalysed reaction is 5-(methylsulfanyl)-alpha-D-ribose 1-phosphate = 5-(methylsulfanyl)-D-ribulose 1-phosphate. Its pathway is amino-acid biosynthesis; L-methionine biosynthesis via salvage pathway; L-methionine from S-methyl-5-thio-alpha-D-ribose 1-phosphate: step 1/6. Catalyzes the interconversion of methylthioribose-1-phosphate (MTR-1-P) into methylthioribulose-1-phosphate (MTRu-1-P). The sequence is that of Methylthioribose-1-phosphate isomerase (mri1) from Xenopus tropicalis (Western clawed frog).